Reading from the N-terminus, the 244-residue chain is Phosphoadenosine 5'-phosphosulfate reductase (244 aa).

Residue Cys239 is the Nucleophile; cysteine thiosulfonate intermediate of the active site.

It belongs to the PAPS reductase family. CysH subfamily.

It is found in the cytoplasm. The enzyme catalyses [thioredoxin]-disulfide + sulfite + adenosine 3',5'-bisphosphate + 2 H(+) = [thioredoxin]-dithiol + 3'-phosphoadenylyl sulfate. It functions in the pathway sulfur metabolism; hydrogen sulfide biosynthesis; sulfite from sulfate: step 3/3. Functionally, catalyzes the formation of sulfite from phosphoadenosine 5'-phosphosulfate (PAPS) using thioredoxin as an electron donor. The sequence is that of Phosphoadenosine 5'-phosphosulfate reductase from Citrobacter koseri (strain ATCC BAA-895 / CDC 4225-83 / SGSC4696).